The following is a 199-amino-acid chain: Peptidyl-tRNA hydrolase (199 aa).

TRNA is bound at residue Y18. The active-site Proton acceptor is the H23. Residues Y72, N74, and N120 each contribute to the tRNA site.

Belongs to the PTH family. In terms of assembly, monomer.

It is found in the cytoplasm. It catalyses the reaction an N-acyl-L-alpha-aminoacyl-tRNA + H2O = an N-acyl-L-amino acid + a tRNA + H(+). Functionally, hydrolyzes ribosome-free peptidyl-tRNAs (with 1 or more amino acids incorporated), which drop off the ribosome during protein synthesis, or as a result of ribosome stalling. Its function is as follows. Catalyzes the release of premature peptidyl moieties from peptidyl-tRNA molecules trapped in stalled 50S ribosomal subunits, and thus maintains levels of free tRNAs and 50S ribosomes. This chain is Peptidyl-tRNA hydrolase, found in Bifidobacterium longum (strain DJO10A).